We begin with the raw amino-acid sequence, 348 residues long: Phenylalanine--tRNA ligase alpha subunit (348 aa).

Mg(2+) is bound at residue Glu-262.

Belongs to the class-II aminoacyl-tRNA synthetase family. Phe-tRNA synthetase alpha subunit type 1 subfamily. In terms of assembly, tetramer of two alpha and two beta subunits. Mg(2+) is required as a cofactor.

It is found in the cytoplasm. It carries out the reaction tRNA(Phe) + L-phenylalanine + ATP = L-phenylalanyl-tRNA(Phe) + AMP + diphosphate + H(+). This Streptococcus pneumoniae (strain JJA) protein is Phenylalanine--tRNA ligase alpha subunit.